Consider the following 177-residue polypeptide: Peptide methionine sulfoxide reductase MsrA (177 aa).

Cysteine 15 is an active-site residue.

Belongs to the MsrA Met sulfoxide reductase family.

It catalyses the reaction L-methionyl-[protein] + [thioredoxin]-disulfide + H2O = L-methionyl-(S)-S-oxide-[protein] + [thioredoxin]-dithiol. It carries out the reaction [thioredoxin]-disulfide + L-methionine + H2O = L-methionine (S)-S-oxide + [thioredoxin]-dithiol. Its function is as follows. Has an important function as a repair enzyme for proteins that have been inactivated by oxidation. Catalyzes the reversible oxidation-reduction of methionine sulfoxide in proteins to methionine. In Listeria monocytogenes serotype 4b (strain CLIP80459), this protein is Peptide methionine sulfoxide reductase MsrA.